We begin with the raw amino-acid sequence, 777 residues long: Rho-GTPase-activating protein 8 (777 aa).

Residues 3 to 420 (SSFSNGFWSK…YQEIIQPESD (418 aa)) enclose the F-BAR domain. A coiled-coil region spans residues 117 to 172 (QKLQTSQQVLTNQIKSYEKKYYTLKKTKSAYYNKCRNLEDYEEESKESNETTSEAI). The DEP domain maps to 213 to 296 (VLQEIPLQDY…WKDKAFQFAG (84 aa)). One can recognise a Rho-GAP domain in the interval 454–650 (VDVEFLSHRD…DLLTYGPSIF (197 aa)). The interval 667 to 709 (LYQSSATPRSTDVSPTRPDSISSVRSHTAVESPRSSFEELQPS) is disordered. Polar residues predominate over residues 668–692 (YQSSATPRSTDVSPTRPDSISSVRS). Residues S676 and S680 each carry the phosphoserine modification. T682 bears the Phosphothreonine mark. The residue at position 686 (S686) is a Phosphoserine. At T694 the chain carries Phosphothreonine. S698 is modified (phosphoserine).

As to quaternary structure, interacts with pak1/shk1. Post-translationally, phosphorylated by pak1/shk1.

It localises to the cytoplasm. Acts in signal transduction. Negatively regulates the pak1/shk1 control pathway. The polypeptide is Rho-GTPase-activating protein 8 (rga8) (Schizosaccharomyces pombe (strain 972 / ATCC 24843) (Fission yeast)).